The primary structure comprises 101 residues: Small ribosomal subunit protein uS14 (101 aa).

The interval 51-70 (LPRDSSPSRQRNRCRQTGRP) is disordered.

It belongs to the universal ribosomal protein uS14 family. Part of the 30S ribosomal subunit. Contacts proteins S3 and S10.

Its function is as follows. Binds 16S rRNA, required for the assembly of 30S particles and may also be responsible for determining the conformation of the 16S rRNA at the A site. This is Small ribosomal subunit protein uS14 from Salmonella arizonae (strain ATCC BAA-731 / CDC346-86 / RSK2980).